A 261-amino-acid chain; its full sequence is Carnitinyl-CoA dehydratase (261 aa).

Glutamate 111 serves as the catalytic Nucleophile. Residue glutamate 131 is the Proton acceptor of the active site.

Belongs to the enoyl-CoA hydratase/isomerase family.

It carries out the reaction (R)-carnitinyl-CoA = crotonobetainyl-CoA + H2O. It functions in the pathway amine and polyamine metabolism; carnitine metabolism. Catalyzes the reversible dehydration of L-carnitinyl-CoA to crotonobetainyl-CoA. The sequence is that of Carnitinyl-CoA dehydratase from Escherichia coli O6:K15:H31 (strain 536 / UPEC).